The following is a 203-amino-acid chain: Holliday junction branch migration complex subunit RuvA (203 aa).

The segment at 1–64 is domain I; the sequence is MIGRLRGIIL…EDAQLLYGFN (64 aa). A domain II region spans residues 65–142; it reads NKQERTLFKE…KGLHGDLFTP (78 aa). A flexible linker region spans residues 143-154; sequence AADLVLTSPAGP. Residues 155–203 form a domain III region; sequence TADDAEQEAVAALVALGYKPQEASRMVSKIARPDANSETLIREALRAAL.

It belongs to the RuvA family. As to quaternary structure, homotetramer. Forms an RuvA(8)-RuvB(12)-Holliday junction (HJ) complex. HJ DNA is sandwiched between 2 RuvA tetramers; dsDNA enters through RuvA and exits via RuvB. An RuvB hexamer assembles on each DNA strand where it exits the tetramer. Each RuvB hexamer is contacted by two RuvA subunits (via domain III) on 2 adjacent RuvB subunits; this complex drives branch migration. In the full resolvosome a probable DNA-RuvA(4)-RuvB(12)-RuvC(2) complex forms which resolves the HJ.

The protein localises to the cytoplasm. The RuvA-RuvB-RuvC complex processes Holliday junction (HJ) DNA during genetic recombination and DNA repair, while the RuvA-RuvB complex plays an important role in the rescue of blocked DNA replication forks via replication fork reversal (RFR). RuvA specifically binds to HJ cruciform DNA, conferring on it an open structure. The RuvB hexamer acts as an ATP-dependent pump, pulling dsDNA into and through the RuvAB complex. HJ branch migration allows RuvC to scan DNA until it finds its consensus sequence, where it cleaves and resolves the cruciform DNA. This is Holliday junction branch migration complex subunit RuvA from Klebsiella pneumoniae (strain 342).